We begin with the raw amino-acid sequence, 571 residues long: Isocitrate dehydrogenase kinase/phosphatase (571 aa).

Residues 318-324 and Lys-339 each bind ATP; that span reads APGVRGM. Asp-374 is a catalytic residue.

Belongs to the AceK family.

It is found in the cytoplasm. The catalysed reaction is L-seryl-[isocitrate dehydrogenase] + ATP = O-phospho-L-seryl-[isocitrate dehydrogenase] + ADP + H(+). Bifunctional enzyme which can phosphorylate or dephosphorylate isocitrate dehydrogenase (IDH) on a specific serine residue. This is a regulatory mechanism which enables bacteria to bypass the Krebs cycle via the glyoxylate shunt in response to the source of carbon. When bacteria are grown on glucose, IDH is fully active and unphosphorylated, but when grown on acetate or ethanol, the activity of IDH declines drastically concomitant with its phosphorylation. This chain is Isocitrate dehydrogenase kinase/phosphatase, found in Pseudomonas putida (strain ATCC 700007 / DSM 6899 / JCM 31910 / BCRC 17059 / LMG 24140 / F1).